The sequence spans 269 residues: Dihydropteroate synthase (269 aa).

In terms of domain architecture, Pterin-binding spans 14 to 261 (TYIMGILNFT…DVLENSRAAK (248 aa)). Asparagine 21 lines the Mg(2+) pocket. (7,8-dihydropterin-6-yl)methyl diphosphate is bound by residues threonine 61, aspartate 95, asparagine 114, aspartate 178, lysine 214, and 249 to 251 (RVH).

This sequence belongs to the DHPS family. Mg(2+) is required as a cofactor.

It catalyses the reaction (7,8-dihydropterin-6-yl)methyl diphosphate + 4-aminobenzoate = 7,8-dihydropteroate + diphosphate. It participates in cofactor biosynthesis; tetrahydrofolate biosynthesis; 7,8-dihydrofolate from 2-amino-4-hydroxy-6-hydroxymethyl-7,8-dihydropteridine diphosphate and 4-aminobenzoate: step 1/2. Catalyzes the condensation of para-aminobenzoate (pABA) with 6-hydroxymethyl-7,8-dihydropterin diphosphate (DHPt-PP) to form 7,8-dihydropteroate (H2Pte), the immediate precursor of folate derivatives. The polypeptide is Dihydropteroate synthase (Clostridium beijerinckii (strain ATCC 51743 / NCIMB 8052) (Clostridium acetobutylicum)).